A 154-amino-acid chain; its full sequence is RxLR effector protein PITG_12737 (154 aa).

An N-terminal signal peptide occupies residues 1 to 16; it reads MRVYFILILAVATVSG. The short motif at 42 to 58 is the RxLR-dEER element; that stretch reads RLLRAELTTDETYPEER.

It belongs to the RxLR effector family.

The protein localises to the secreted. It localises to the host nucleus. Its subcellular location is the host cytoplasm. Functionally, effector that enhances P.infestans colonization of Nicotiana benthamiana leaves. This is RxLR effector protein PITG_12737 from Phytophthora infestans (strain T30-4) (Potato late blight agent).